We begin with the raw amino-acid sequence, 452 residues long: Bifunctional protein GlmU (452 aa).

The interval 1–230 (MSRSRSAIIL…ADEVLGVNSR (230 aa)) is pyrophosphorylase. UDP-N-acetyl-alpha-D-glucosamine is bound by residues 10-13 (LAAG), Lys24, Gln75, and 80-81 (GT). Mg(2+) is bound at residue Asp105. Positions 141, 156, 171, and 228 each coordinate UDP-N-acetyl-alpha-D-glucosamine. Asn228 is a binding site for Mg(2+). The interval 231-251 (ADLAEAEAAFQSRMRQSMMAD) is linker. Residues 252 to 452 (GVTLIAPETV…ARKARKDSQT (201 aa)) form an N-acetyltransferase region. Residues Arg317 and Lys335 each contribute to the UDP-N-acetyl-alpha-D-glucosamine site. The Proton acceptor role is filled by His347. The UDP-N-acetyl-alpha-D-glucosamine site is built by Tyr350 and Asn361. Residues Ala364, 370 to 371 (NY), Ser389, Thr407, and Arg424 contribute to the acetyl-CoA site.

It in the N-terminal section; belongs to the N-acetylglucosamine-1-phosphate uridyltransferase family. In the C-terminal section; belongs to the transferase hexapeptide repeat family. Homotrimer. Mg(2+) serves as cofactor.

It localises to the cytoplasm. The catalysed reaction is alpha-D-glucosamine 1-phosphate + acetyl-CoA = N-acetyl-alpha-D-glucosamine 1-phosphate + CoA + H(+). It carries out the reaction N-acetyl-alpha-D-glucosamine 1-phosphate + UTP + H(+) = UDP-N-acetyl-alpha-D-glucosamine + diphosphate. Its pathway is nucleotide-sugar biosynthesis; UDP-N-acetyl-alpha-D-glucosamine biosynthesis; N-acetyl-alpha-D-glucosamine 1-phosphate from alpha-D-glucosamine 6-phosphate (route II): step 2/2. It functions in the pathway nucleotide-sugar biosynthesis; UDP-N-acetyl-alpha-D-glucosamine biosynthesis; UDP-N-acetyl-alpha-D-glucosamine from N-acetyl-alpha-D-glucosamine 1-phosphate: step 1/1. The protein operates within bacterial outer membrane biogenesis; LPS lipid A biosynthesis. In terms of biological role, catalyzes the last two sequential reactions in the de novo biosynthetic pathway for UDP-N-acetylglucosamine (UDP-GlcNAc). The C-terminal domain catalyzes the transfer of acetyl group from acetyl coenzyme A to glucosamine-1-phosphate (GlcN-1-P) to produce N-acetylglucosamine-1-phosphate (GlcNAc-1-P), which is converted into UDP-GlcNAc by the transfer of uridine 5-monophosphate (from uridine 5-triphosphate), a reaction catalyzed by the N-terminal domain. This chain is Bifunctional protein GlmU, found in Maricaulis maris (strain MCS10) (Caulobacter maris).